Here is a 968-residue protein sequence, read N- to C-terminus: MPFTLGQRWISDTESELGLGTVVAVDARTVTLLFPSTGENRLYARSDSPVTRVMFNPGDTITSHDGWQMQVEEVKEENGLLTYIGTRLDTEESGVALREVFLDSKLVFSKPQDRLFAGQIDRMDRFALRYRARKYSSEQFRMPYSGLRGQRTSLIPHQLNIAHDVGRRHAPRVLLADEVGLGKTIEAGMILHQQLLSGAAERVLIIVPETLQHQWLVEMLRRFNLRFALFDDERYAEAQHDAYNPFDTEQLVICSLDFARRSKQRLEHLCEAEWDLLVVDEAHHLVWSEDAPSREYQAIEQLAEHVPGVLLLTATPEQLGMESHFARLRLLDPNRFHDFAQFVEEQKNYRPVADAVAMLLAGNKLSNDELNMLGEMIGEQDIEPLLQAANSDSEDAQSARQELVSMLMDRHGTSRVLFRNTRNGVKGFPKRELHTIKLPLPTQYQTAIKVSGIMGARKSAEDRARDMLYPERIYQEFEGDNATWWNFDPRVEWLMGYLTSHRSQKVLVICAKAATALQLEQVLREREGIRAAVFHEGMSIIERDRAAAWFAEEDTGAQVLLCSEIGSEGRNFQFASHMVMFDLPFNPDLLEQRIGRLDRIGQAHDIQIHVPYLEKTAQSVLVRWYHEGLDAFEHTCPTGRTIYDSVYNDLINYLASPVQTEGFDDLIKNCREQHEALKAQLEQGRDRLLEIHSNGGEKAQALAESIEEQDDDTNLIAFAMNLFDIIGINQDDRGDNMIVLTPSDHMLVPDFPGLSEDGITITFDREVALAREDAQFITWEHPLIRNGLDLILSGDTGSSTISLLKNKALPVGTLLVELIYVVEAQAPKQLQLNRFLPPTPVRMLLDKNGNNLAAQVEFETFNRQLNAVNRHTGSKLVNAVQQDVHAILQLGEAQIEKSARALIDAARNEADEKLSAELSRMEALRAVNPNIRDDELTAIESNRQQVMESLDQAGWRLDALRLIVVTHQ.

One can recognise a Helicase ATP-binding domain in the interval 164–334 (DVGRRHAPRV…FARLRLLDPN (171 aa)). Position 177 to 184 (177 to 184 (DEVGLGKT)) interacts with ATP. The DEAH box motif lies at 280–283 (DEAH). In terms of domain architecture, Helicase C-terminal spans 490-662 (RVEWLMGYLT…YLASPVQTEG (173 aa)).

The protein belongs to the SNF2/RAD54 helicase family. RapA subfamily. As to quaternary structure, interacts with the RNAP. Has a higher affinity for the core RNAP than for the holoenzyme. Its ATPase activity is stimulated by binding to RNAP.

Transcription regulator that activates transcription by stimulating RNA polymerase (RNAP) recycling in case of stress conditions such as supercoiled DNA or high salt concentrations. Probably acts by releasing the RNAP, when it is trapped or immobilized on tightly supercoiled DNA. Does not activate transcription on linear DNA. Probably not involved in DNA repair. The chain is RNA polymerase-associated protein RapA from Shigella sonnei (strain Ss046).